The sequence spans 178 residues: uncharacterized protein (178 aa).

The N-terminal stretch at 1 to 20 is a signal peptide; the sequence is MKKLLVASLALLILTPVALA.

This is an uncharacterized protein from Archaeoglobus fulgidus (strain ATCC 49558 / DSM 4304 / JCM 9628 / NBRC 100126 / VC-16).